Consider the following 259-residue polypeptide: BTB/POZ domain-containing protein KCTD4 (259 aa).

Residues 33 to 134 (TLMTLNVGGY…EVKSRWEKEQ (102 aa)) enclose the BTB domain.

The chain is BTB/POZ domain-containing protein KCTD4 (Kctd4) from Mus musculus (Mouse).